The following is a 302-amino-acid chain: Methionyl-tRNA formyltransferase (302 aa).

108–111 (SLLP) lines the (6S)-5,6,7,8-tetrahydrofolate pocket.

The protein belongs to the Fmt family.

It catalyses the reaction L-methionyl-tRNA(fMet) + (6R)-10-formyltetrahydrofolate = N-formyl-L-methionyl-tRNA(fMet) + (6S)-5,6,7,8-tetrahydrofolate + H(+). Functionally, attaches a formyl group to the free amino group of methionyl-tRNA(fMet). The formyl group appears to play a dual role in the initiator identity of N-formylmethionyl-tRNA by promoting its recognition by IF2 and preventing the misappropriation of this tRNA by the elongation apparatus. In Nitratiruptor sp. (strain SB155-2), this protein is Methionyl-tRNA formyltransferase.